The sequence spans 244 residues: Cytochrome c1 (244 aa).

The N-terminal stretch at 1–19 (MRKLILATFLLLAPTALLA) is a signal peptide. Heme c-binding residues include cysteine 50, cysteine 53, and histidine 54. The helical transmembrane segment at 220-240 (YVLLFLGFLFILAYLLKKEYW) threads the bilayer.

As to quaternary structure, the main subunits of complex b-c1 are: cytochrome b, cytochrome c1 and the Rieske protein. Binds 1 heme c group covalently per subunit.

The protein resides in the cell membrane. Its function is as follows. Component of the ubiquinol-cytochrome c reductase complex (complex III or cytochrome b-c1 complex), which is a respiratory chain that generates an electrochemical potential coupled to ATP synthesis. c1 functions as an electron donor to cytochrome c. This is Cytochrome c1 (petC) from Allochromatium vinosum (strain ATCC 17899 / DSM 180 / NBRC 103801 / NCIMB 10441 / D) (Chromatium vinosum).